A 314-amino-acid polypeptide reads, in one-letter code: Synaptophysin (314 aa).

The Cytoplasmic segment spans residues 1–25; the sequence is MLLLADMDVVNQLVAGGQFRVVKEP. The MARVEL domain occupies 21 to 228; that stretch reads VVKEPLGFVK…NLWFVFKETG (208 aa). Residues 26–49 form a helical membrane-spanning segment; that stretch reads LGFVKVLQWVFAIFAFATCGSYTG. Residues 50–107 are Vesicular-facing; sequence ELRLSVECANKTESALNIEVEFEYPFRLHQVYFDAPSCVKGGTTKIFLVGDYSSSAEF. Asn-59 is a glycosylation site (N-linked (GlcNAc...) asparagine). A Phosphotyrosine modification is found at Tyr-81. A helical transmembrane segment spans residues 108–131; it reads FVTVAVFAFLYSMGALATYIFLQN. Over 132–138 the chain is Cytoplasmic; the sequence is KYRENNK. The helical transmembrane segment at 139–162 threads the bilayer; sequence GPMMDFLATAVFAFMWLVSSSAWA. The Vesicular segment spans residues 163 to 200; it reads KGLSDVKMATDPENIIKEMPMCRQTGNTCKELRDPVTS. The helical transmembrane segment at 201–224 threads the bilayer; that stretch reads GLNTSVVFGFLNLVLWVGNLWFVF. Topologically, residues 225–314 are cytoplasmic; it reads KETGWAAPFM…GAPTSFSNQM (90 aa). At Thr-227 the chain carries Phosphothreonine. The interval 239-314 is disordered; that stretch reads GAPEKQPAPG…GAPTSFSNQM (76 aa). Residues 254 to 264 are compositionally biased toward gly residues; sequence AGYGQGPGGYG. The segment at 255–305 is repeats, Gly-rich; sequence GYGQGPGGYGPQDSYGPQGGYQPDYGQPASGGGGGYGPQGDYGQQGYGQQG. Low complexity predominate over residues 265–282; the sequence is PQDSYGPQGGYQPDYGQP. Tyr-279 and Tyr-296 each carry phosphotyrosine. Positions 283–303 are enriched in gly residues; it reads ASGGGGGYGPQGDYGQQGYGQ.

The protein belongs to the synaptophysin/synaptobrevin family. In terms of assembly, homohexamer or homotetramer. Interacts with SRCIN1. Interacts with VAMP2; the interaction is inhibited by interaction of VAPM2 with SEPT8. In terms of processing, ubiquitinated; mediated by SIAH1 or SIAH2 and leading to its subsequent proteasomal degradation. Post-translationally, phosphorylated by SRC.

It localises to the cytoplasmic vesicle. It is found in the secretory vesicle. The protein resides in the synaptic vesicle membrane. The protein localises to the synapse. Its subcellular location is the synaptosome. Its function is as follows. Possibly involved in structural functions as organizing other membrane components or in targeting the vesicles to the plasma membrane. Involved in the regulation of short-term and long-term synaptic plasticity. The chain is Synaptophysin (Syp) from Mus musculus (Mouse).